A 692-amino-acid polypeptide reads, in one-letter code: Elongation factor G (692 aa).

The tr-type G domain occupies 8-282 (EKTRNIGIMA…AVLDYLPAPT (275 aa)). GTP-binding positions include 17-24 (AHIDAGKT), 81-85 (DTPGH), and 135-138 (NKMD). 4 positions are modified to phosphoserine: Ser-213, Ser-302, Ser-569, and Ser-680.

It belongs to the TRAFAC class translation factor GTPase superfamily. Classic translation factor GTPase family. EF-G/EF-2 subfamily. Post-translationally, phosphorylated on threonine residue(s). Phosphorylated by PrkC and dephosphorylated by PrpC, in vitro.

The protein localises to the cytoplasm. Its function is as follows. Catalyzes the GTP-dependent ribosomal translocation step during translation elongation. During this step, the ribosome changes from the pre-translocational (PRE) to the post-translocational (POST) state as the newly formed A-site-bound peptidyl-tRNA and P-site-bound deacylated tRNA move to the P and E sites, respectively. Catalyzes the coordinated movement of the two tRNA molecules, the mRNA and conformational changes in the ribosome. This Bacillus subtilis (strain 168) protein is Elongation factor G (fusA).